The primary structure comprises 258 residues: Imidazole glycerol phosphate synthase subunit HisF (258 aa).

Active-site residues include Asp11 and Asp130.

The protein belongs to the HisA/HisF family. Heterodimer of HisH and HisF.

Its subcellular location is the cytoplasm. It catalyses the reaction 5-[(5-phospho-1-deoxy-D-ribulos-1-ylimino)methylamino]-1-(5-phospho-beta-D-ribosyl)imidazole-4-carboxamide + L-glutamine = D-erythro-1-(imidazol-4-yl)glycerol 3-phosphate + 5-amino-1-(5-phospho-beta-D-ribosyl)imidazole-4-carboxamide + L-glutamate + H(+). It functions in the pathway amino-acid biosynthesis; L-histidine biosynthesis; L-histidine from 5-phospho-alpha-D-ribose 1-diphosphate: step 5/9. Its function is as follows. IGPS catalyzes the conversion of PRFAR and glutamine to IGP, AICAR and glutamate. The HisF subunit catalyzes the cyclization activity that produces IGP and AICAR from PRFAR using the ammonia provided by the HisH subunit. This chain is Imidazole glycerol phosphate synthase subunit HisF, found in Yersinia pseudotuberculosis serotype IB (strain PB1/+).